Consider the following 288-residue polypeptide: MKMKAYAKINIALDAIGKREDNYHLLRMIMQTVDLYDVIDIEKSNDSNISISCNKHYVPTDERNLAYKAAVLFRDEFNIKDGVKINIKKNIPVAAGMAGGSTNAAAVLVIMNKLFNVNASLEVLKEIGLKIGADVPYCIEGGTALCEGIGEIITPLKPFENKILVVLKPNFGVSTKEVYTNLDINKIRKHVNIEGLIQAMENDDLDYVSKNMKNVLENVTLKKHTILKNIKEDMRKSGALGAMMSGSGPTVFAFFDDMLTAQRAFEFLKGKYKYSDVYITRTINSNNL.

The active site involves Lys8. ATP is bound at residue 92–102; sequence PVAAGMAGGST. Residue Asp134 is part of the active site.

The protein belongs to the GHMP kinase family. IspE subfamily.

The enzyme catalyses 4-CDP-2-C-methyl-D-erythritol + ATP = 4-CDP-2-C-methyl-D-erythritol 2-phosphate + ADP + H(+). Its pathway is isoprenoid biosynthesis; isopentenyl diphosphate biosynthesis via DXP pathway; isopentenyl diphosphate from 1-deoxy-D-xylulose 5-phosphate: step 3/6. Its function is as follows. Catalyzes the phosphorylation of the position 2 hydroxy group of 4-diphosphocytidyl-2C-methyl-D-erythritol. This is 4-diphosphocytidyl-2-C-methyl-D-erythritol kinase from Clostridium perfringens (strain ATCC 13124 / DSM 756 / JCM 1290 / NCIMB 6125 / NCTC 8237 / Type A).